A 270-amino-acid chain; its full sequence is MQSNYFSFPQFDPVIFEIGPIGLRWYGLMYLLGFLFARWLAVKRANQTGSGWTTDQVDSLLFNGFMGVFLGGRIGYVLFYQFDYFLQDPAYLFRVWEGGMSFHGGLIGVILAMLITAKIQKRGFWQTADFVAPLIPFGLGMGRIGNFINDELWGRVTDVPWAVLFPSGGYLPRHPSQLYEAVLEGIVLFFILNWYIKKPRPIGATAGLFLLGYGIFRFIVEFFREPDAQLGLYFGQHISMGQILSTPMILIGAVIMLVAYQSAGKKREIL.

Transmembrane regions (helical) follow at residues 14–34, 60–80, 95–115, 128–148, 176–196, 202–222, and 238–258; these read VIFE…LLGF, LLFN…VLFY, VWEG…AMLI, ADFV…GNFI, SQLY…NWYI, IGAT…IVEF, and ISMG…IMLV. R143 contributes to the a 1,2-diacyl-sn-glycero-3-phospho-(1'-sn-glycerol) binding site.

The protein belongs to the Lgt family.

Its subcellular location is the cell inner membrane. It catalyses the reaction L-cysteinyl-[prolipoprotein] + a 1,2-diacyl-sn-glycero-3-phospho-(1'-sn-glycerol) = an S-1,2-diacyl-sn-glyceryl-L-cysteinyl-[prolipoprotein] + sn-glycerol 1-phosphate + H(+). Its pathway is protein modification; lipoprotein biosynthesis (diacylglyceryl transfer). Catalyzes the transfer of the diacylglyceryl group from phosphatidylglycerol to the sulfhydryl group of the N-terminal cysteine of a prolipoprotein, the first step in the formation of mature lipoproteins. The protein is Phosphatidylglycerol--prolipoprotein diacylglyceryl transferase of Pasteurella multocida (strain Pm70).